Here is a 200-residue protein sequence, read N- to C-terminus: Large ribosomal subunit protein uL4 (200 aa).

Residues Thr-42–Gly-65 are disordered.

Belongs to the universal ribosomal protein uL4 family. As to quaternary structure, part of the 50S ribosomal subunit.

In terms of biological role, one of the primary rRNA binding proteins, this protein initially binds near the 5'-end of the 23S rRNA. It is important during the early stages of 50S assembly. It makes multiple contacts with different domains of the 23S rRNA in the assembled 50S subunit and ribosome. Its function is as follows. Forms part of the polypeptide exit tunnel. This is Large ribosomal subunit protein uL4 from Photobacterium profundum (strain SS9).